A 213-amino-acid chain; its full sequence is Major fimbrial subunit (213 aa).

A signal peptide spans 1–20; sequence MKKTLLGSLILLAFAGNVQA. Cys-41 and Cys-81 are joined by a disulfide.

It belongs to the fimbrial protein family.

The protein localises to the fimbrium. Mediates adherence to oropharyngeal epithelial cells. Helps the airway colonization process. The chain is Major fimbrial subunit (hifA) from Haemophilus influenzae.